Consider the following 520-residue polypeptide: ATP-dependent RNA helicase CshA (520 aa).

Positions 2–30 (TKFSEFGLDEKIVKSVNRMGFEEATPIQE) match the Q motif motif. The 171-residue stretch at 33–203 (IPLGLEGKDL…ERFMHSPELI (171 aa)) folds into the Helicase ATP-binding domain. Position 46-53 (46-53 (AQTGTGKT)) interacts with ATP. Positions 151–154 (DEAD) match the DEAD box motif. The Helicase C-terminal domain maps to 214–374 (LIEQFFVKVH…PLQAPTWDEA (161 aa)). Basic and acidic residues predominate over residues 428 to 439 (KTPVHITEERPL). A disordered region spans residues 428-520 (KTPVHITEER…NKGNYSQKSK (93 aa)). Gly residues-rich tracts occupy residues 442 to 468 (RGGG…GKGG) and 482 to 496 (SGGG…GGGG).

The protein belongs to the DEAD box helicase family. CshA subfamily. Oligomerizes, may be a member of the RNA degradosome.

It localises to the cytoplasm. The catalysed reaction is ATP + H2O = ADP + phosphate + H(+). DEAD-box RNA helicase possibly involved in RNA degradation. Unwinds dsRNA in both 5'- and 3'-directions, has RNA-dependent ATPase activity. Involved in cold tolerance, motility and alcohol tolerance. This is ATP-dependent RNA helicase CshA from Listeria monocytogenes serovar 1/2a (strain ATCC BAA-679 / EGD-e).